We begin with the raw amino-acid sequence, 147 residues long: MKYTKKEKEELKKVLTEEEYYVTQENGTERPFTNEYWDFNGEGIYVDITTGEPLFTSKDKFHSSCGWPAFSKPIDRSIIKEKVDKSHGMIRTEVRSKLGDSHLGHVFCDGPEELGGLRYCINSASLKFIPKEELKEKGYEEYLELFK.

Residues 8 to 131 enclose the MsrB domain; the sequence is KEELKKVLTE…NSASLKFIPK (124 aa). Cys-120 acts as the Nucleophile in catalysis.

This sequence belongs to the MsrB Met sulfoxide reductase family.

The catalysed reaction is L-methionyl-[protein] + [thioredoxin]-disulfide + H2O = L-methionyl-(R)-S-oxide-[protein] + [thioredoxin]-dithiol. In Clostridium perfringens (strain ATCC 13124 / DSM 756 / JCM 1290 / NCIMB 6125 / NCTC 8237 / Type A), this protein is Peptide methionine sulfoxide reductase MsrB.